The chain runs to 161 residues: uncharacterized protein (161 aa).

This is an uncharacterized protein from Saimiri sciureus (Common squirrel monkey).